The sequence spans 177 residues: Adenine phosphoribosyltransferase (177 aa).

The protein belongs to the purine/pyrimidine phosphoribosyltransferase family. As to quaternary structure, homodimer.

It is found in the cytoplasm. It carries out the reaction AMP + diphosphate = 5-phospho-alpha-D-ribose 1-diphosphate + adenine. It functions in the pathway purine metabolism; AMP biosynthesis via salvage pathway; AMP from adenine: step 1/1. Catalyzes a salvage reaction resulting in the formation of AMP, that is energically less costly than de novo synthesis. This Pelodictyon phaeoclathratiforme (strain DSM 5477 / BU-1) protein is Adenine phosphoribosyltransferase.